Consider the following 410-residue polypeptide: Platelet-activating factor acetylhydrolase IB subunit alpha (410 aa).

A required for self-association and interaction with PAFAH1B2 and PAFAH1B3 region spans residues 1–38 (MVLSQRQRDELNRAIADYLRSNGYEEAYSVFKKEAELD). Residues 1–66 (MVLSQRQRDE…SVIRLQKKVM (66 aa)) form an interaction with NDE1 region. Residues 1 to 102 (MVLSQRQRDE…EWIPRPPEKY (102 aa)) are interaction with NDEL1. A LisH domain is found at 7-39 (QRDELNRAIADYLRSNGYEEAYSVFKKEAELDM). The residue at position 53 (Lys53) is an N6-acetyllysine. A coiled-coil region spans residues 56–82 (TSVIRLQKKVMELESKLNEAKEEFTSG). An interaction with dynein and dynactin region spans residues 83–410 (GPLGQKRDPK…DQTVKVWECR (328 aa)). 7 WD repeats span residues 106-147 (GHRS…RTLK), 148-187 (GHTD…CIRT), 190-229 (GHDH…CVKT), 232-271 (GHRE…CKAE), 274-333 (EHEH…CLMT), 336-377 (GHDN…KTLN), and 378-410 (AHEH…WECR). A Phosphoserine modification is found at Ser109. The interval 367-409 (YKNKRCMKTLNAHEHFVTSLDFHKTAPYVVTGSVDQTVKVWEC) is interaction with DCX. The tract at residues 388–410 (FHKTAPYVVTGSVDQTVKVWECR) is interaction with NDEL1.

It belongs to the WD repeat LIS1/nudF family. As to quaternary structure, can self-associate. Component of the cytosolic PAF-AH (I) heterotetrameric enzyme, which is composed of PAFAH1B1 (beta), PAFAH1B2 (alpha2) and PAFAH1B3 (alpha1) subunits. The catalytic activity of the enzyme resides in the alpha1 (PAFAH1B3) and alpha2 (PAFAH1B2) subunits, whereas the beta subunit (PAFAH1B1) has regulatory activity. Trimer formation is not essential for the catalytic activity. Interacts with the catalytic dimer of PAF-AH (I) heterotetrameric enzyme: interacts with PAFAH1B2 homodimer (alpha2/alpha2 homodimer), PAFAH1B3 homodimer (alpha1/alpha1 homodimer) and PAFAH1B2-PAFAH1B3 heterodimer (alpha2/alpha1 heterodimer). Interacts with DCX, dynein, dynactin, IQGAP1, KATNB1, NDE1, NDEL1, NUDC and RSN. Interacts with DISC1, and this interaction is enhanced by NDEL1. Interacts with DAB1 when DAB1 is phosphorylated in response to RELN/reelin signaling. Interacts with INTS13. Interacts with DCDC1.

Its subcellular location is the cytoplasm. The protein resides in the cytoskeleton. The protein localises to the microtubule organizing center. It localises to the centrosome. It is found in the spindle. Its subcellular location is the nucleus membrane. Functionally, regulatory subunit (beta subunit) of the cytosolic type I platelet-activating factor (PAF) acetylhydrolase (PAF-AH (I)), an enzyme that catalyzes the hydrolyze of the acetyl group at the sn-2 position of PAF and its analogs and participates in PAF inactivation. Regulates the PAF-AH (I) activity in a catalytic dimer composition-dependent manner. Positively regulates the activity of the minus-end directed microtubule motor protein dynein. May enhance dynein-mediated microtubule sliding by targeting dynein to the microtubule plus end. Required for several dynein- and microtubule-dependent processes such as the maintenance of Golgi integrity, the peripheral transport of microtubule fragments and the coupling of the nucleus and centrosome. Required during brain development for the proliferation of neuronal precursors and the migration of newly formed neurons from the ventricular/subventricular zone toward the cortical plate. Neuronal migration involves a process called nucleokinesis, whereby migrating cells extend an anterior process into which the nucleus subsequently translocates. During nucleokinesis dynein at the nuclear surface may translocate the nucleus towards the centrosome by exerting force on centrosomal microtubules. Also required for proper activation of Rho GTPases and actin polymerization at the leading edge of locomoting cerebellar neurons and postmigratory hippocampal neurons in response to calcium influx triggered via NMDA receptors. May also play a role in other forms of cell locomotion including the migration of fibroblasts during wound healing. Required for dynein recruitment to microtubule plus ends and BICD2-bound cargos. May modulate the Reelin pathway through interaction of the PAF-AH (I) catalytic dimer with VLDLR. This Macaca fascicularis (Crab-eating macaque) protein is Platelet-activating factor acetylhydrolase IB subunit alpha.